The following is a 320-amino-acid chain: tRNA pseudouridine synthase B (320 aa).

Aspartate 49 functions as the Nucleophile in the catalytic mechanism.

The protein belongs to the pseudouridine synthase TruB family. Type 1 subfamily.

It catalyses the reaction uridine(55) in tRNA = pseudouridine(55) in tRNA. In terms of biological role, responsible for synthesis of pseudouridine from uracil-55 in the psi GC loop of transfer RNAs. The sequence is that of tRNA pseudouridine synthase B from Bartonella tribocorum (strain CIP 105476 / IBS 506).